The primary structure comprises 152 residues: MFRGATLVNLDSKGRLTVPTRYREQLIESATGQMVCTIDIHHPCLLLYPLPEWEIIEQKLSRLSSMNPVERRVQRLLLGHASECQMDGAGRLLIAPVLRQHAGLTKEVMLVGQFNKFELWDETTWYQQVKEDIDAEQSATETLSERLQDLSL.

SpoVT-AbrB domains lie at 5–52 (ATLV…PLPE) and 81–124 (ASEC…DETT).

Belongs to the MraZ family. In terms of assembly, forms oligomers.

The protein localises to the cytoplasm. The protein resides in the nucleoid. In terms of biological role, negatively regulates its own expression and that of the subsequent genes in the proximal part of the division and cell wall (dcw) gene cluster. Acts by binding directly to DNA. May also regulate the expression of genes outside the dcw cluster. The polypeptide is Transcriptional regulator MraZ (Salmonella gallinarum (strain 287/91 / NCTC 13346)).